The sequence spans 117 residues: Large ribosomal subunit protein bL20 (117 aa).

This sequence belongs to the bacterial ribosomal protein bL20 family.

Its function is as follows. Binds directly to 23S ribosomal RNA and is necessary for the in vitro assembly process of the 50S ribosomal subunit. It is not involved in the protein synthesizing functions of that subunit. This chain is Large ribosomal subunit protein bL20, found in Streptococcus suis (strain 05ZYH33).